We begin with the raw amino-acid sequence, 324 residues long: Cytochrome f (324 aa).

The first 30 residues, 1 to 30, serve as a signal peptide directing secretion; that stretch reads MNMRFSPKALVRQLGRLSLVACLSLGLLGA. The heme site is built by Y42, C62, C65, and H66. A helical transmembrane segment spans residues 290–310; sequence VLGVIAFFFAVMLAQIMLVLK.

Belongs to the cytochrome f family. In terms of assembly, the 4 large subunits of the cytochrome b6-f complex are cytochrome b6, subunit IV (17 kDa polypeptide, PetD), cytochrome f and the Rieske protein, while the 4 small subunits are PetG, PetL, PetM and PetN. The complex functions as a dimer. Requires heme as cofactor.

Its subcellular location is the cellular thylakoid membrane. In terms of biological role, component of the cytochrome b6-f complex, which mediates electron transfer between photosystem II (PSII) and photosystem I (PSI), cyclic electron flow around PSI, and state transitions. The sequence is that of Cytochrome f from Synechococcus elongatus (strain ATCC 33912 / PCC 7942 / FACHB-805) (Anacystis nidulans R2).